The sequence spans 354 residues: 3-dehydroquinate synthase (354 aa).

NAD(+) is bound by residues 66–71 (SGETSK), 100–104 (GATGD), 124–125 (TT), Lys-136, Lys-145, and 163–166 (FLET). Zn(2+)-binding residues include Glu-178, His-242, and His-256.

The protein belongs to the sugar phosphate cyclases superfamily. Dehydroquinate synthase family. It depends on NAD(+) as a cofactor. Co(2+) is required as a cofactor. The cofactor is Zn(2+).

Its subcellular location is the cytoplasm. The catalysed reaction is 7-phospho-2-dehydro-3-deoxy-D-arabino-heptonate = 3-dehydroquinate + phosphate. The protein operates within metabolic intermediate biosynthesis; chorismate biosynthesis; chorismate from D-erythrose 4-phosphate and phosphoenolpyruvate: step 2/7. In terms of biological role, catalyzes the conversion of 3-deoxy-D-arabino-heptulosonate 7-phosphate (DAHP) to dehydroquinate (DHQ). The polypeptide is 3-dehydroquinate synthase (Staphylococcus epidermidis (strain ATCC 35984 / DSM 28319 / BCRC 17069 / CCUG 31568 / BM 3577 / RP62A)).